A 310-amino-acid polypeptide reads, in one-letter code: tRNA pseudouridine synthase B (310 aa).

Asp37 functions as the Nucleophile in the catalytic mechanism.

It belongs to the pseudouridine synthase TruB family. Type 1 subfamily.

The catalysed reaction is uridine(55) in tRNA = pseudouridine(55) in tRNA. Responsible for synthesis of pseudouridine from uracil-55 in the psi GC loop of transfer RNAs. In Deinococcus deserti (strain DSM 17065 / CIP 109153 / LMG 22923 / VCD115), this protein is tRNA pseudouridine synthase B.